A 210-amino-acid polypeptide reads, in one-letter code: SAP domain-containing ribonucleoprotein (210 aa).

At Ala-2 the chain carries N-acetylalanine. One can recognise an SAP domain in the interval 8-42 (LHKLKLAELKQECLARGLETKGIKQDLINRLQAYL). Lys-10 carries the post-translational modification N6-acetyllysine. The span at 45-64 (HAEEEANEEDVLGDETEEEE) shows a compositional bias: acidic residues. The tract at residues 45–87 (HAEEEANEEDVLGDETEEEEPKPIELPVKEEEPPEKAVDMASE) is disordered. Residues 65–87 (PKPIELPVKEEEPPEKAVDMASE) show a composition bias toward basic and acidic residues. Residue Lys-142 is modified to N6-acetyllysine. The disordered stretch occupies residues 162-210 (SSISRKSEDDEKLKKRKERFGIVTSSAGTGTTEDTEAKKRKRAERFGIA). A Phosphoserine modification is found at Ser-163. The segment covering 184–193 (VTSSAGTGTT) has biased composition (polar residues).

Belongs to the SAP domain-containing ribonucleoprotein family. In terms of assembly, interacts with DDX39A. Interacts with FUS. Interacts (via the C-terminal domain) with DDX39B; the interaction is direct and facilitates RNA binding of DDX39B. Component of the transcription/export (TREX) complex at least composed of ALYREF/THOC4, DDX39B, SARNP/CIP29, CHTOP and the THO subcomplex; TREX seems to have dynamic structure involving ATP-dependent remodeling; in the complex interacts directly with DDX39B in a ATP-dependent manner which bridges it to ALYREF/THOC4.

The protein localises to the nucleus. It localises to the nucleus speckle. In terms of biological role, binds both single-stranded and double-stranded DNA with higher affinity for the single-stranded form. Specifically binds to scaffold/matrix attachment region DNA. Also binds single-stranded RNA. Enhances RNA unwinding activity of DDX39A. May participate in important transcriptional or translational control of cell growth, metabolism and carcinogenesis. Component of the TREX complex which is thought to couple mRNA transcription, processing and nuclear export, and specifically associates with spliced mRNA and not with unspliced pre-mRNA. The TREX complex is recruited to spliced mRNAs by a transcription-independent mechanism, binds to mRNA upstream of the exon-junction complex (EJC) and is recruited in a splicing- and cap-dependent manner to a region near the 5' end of the mRNA where it functions in mRNA export to the cytoplasm via the TAP/NXF1 pathway. Associates with DDX39B, which facilitates RNA binding of DDX39B and likely plays a role in mRNA export. This Mus musculus (Mouse) protein is SAP domain-containing ribonucleoprotein (Sarnp).